The sequence spans 339 residues: Ribosomal RNA small subunit methyltransferase H (339 aa).

S-adenosyl-L-methionine contacts are provided by residues 52–54 (GGH), Asp-71, Phe-98, Asp-130, and Gln-137.

The protein belongs to the methyltransferase superfamily. RsmH family.

It is found in the cytoplasm. It carries out the reaction cytidine(1402) in 16S rRNA + S-adenosyl-L-methionine = N(4)-methylcytidine(1402) in 16S rRNA + S-adenosyl-L-homocysteine + H(+). Its function is as follows. Specifically methylates the N4 position of cytidine in position 1402 (C1402) of 16S rRNA. The polypeptide is Ribosomal RNA small subunit methyltransferase H (Corynebacterium diphtheriae (strain ATCC 700971 / NCTC 13129 / Biotype gravis)).